A 350-amino-acid chain; its full sequence is Putative deoxyribonuclease-2 (350 aa).

This sequence belongs to the DNase II family.

This chain is Putative deoxyribonuclease-2, found in Burkholderia pseudomallei (strain 1710b).